A 328-amino-acid chain; its full sequence is Homeobox protein DLX-2 (328 aa).

Composition is skewed to polar residues over residues 16 to 28 (QIAA…QHQQ) and 52 to 72 (ESPT…NQQH). 3 disordered regions span residues 16–81 (QIAA…GGGG), 211–270 (WKSG…SSPS), and 300–328 (LHPT…GTIF). The homeobox DNA-binding region spans 152 to 211 (VRKPRTIYSSFQLAALQRRFQKTQYLALPERAELAASLGLTQTQVKIWFQNRRSKFKKMW). Residue Ser232 is modified to Phosphoserine. Residues 250-264 (AGGGGPGSGGSGAGS) show a composition bias toward gly residues.

It belongs to the distal-less homeobox family. In terms of assembly, interacts (via homeobox DNA-binding domain) with POU4F2; this interaction enhances retinal ganglion cell (RGC) differentiation.

Its subcellular location is the nucleus. Acts as a transcriptional activator. Activates transcription of CGA/alpha-GSU, via binding to the downstream activin regulatory element (DARE) in the gene promoter. Plays a role in terminal differentiation of interneurons, such as amacrine and bipolar cells in the developing retina. Likely to play a regulatory role in the development of the ventral forebrain. May play a role in craniofacial patterning and morphogenesis. The sequence is that of Homeobox protein DLX-2 (DLX2) from Homo sapiens (Human).